The primary structure comprises 283 residues: Acetylglutamate kinase (283 aa).

Substrate-binding positions include 64–65 (GG), R86, and N178.

Belongs to the acetylglutamate kinase family. ArgB subfamily.

Its subcellular location is the cytoplasm. It catalyses the reaction N-acetyl-L-glutamate + ATP = N-acetyl-L-glutamyl 5-phosphate + ADP. It participates in amino-acid biosynthesis; L-arginine biosynthesis; N(2)-acetyl-L-ornithine from L-glutamate: step 2/4. Catalyzes the ATP-dependent phosphorylation of N-acetyl-L-glutamate. This is Acetylglutamate kinase from Lactococcus lactis subsp. lactis (strain IL1403) (Streptococcus lactis).